The sequence spans 855 residues: Pre-mRNA-splicing factor SYF1 (855 aa).

HAT repeat units follow at residues 15–47 (LVFE…FKQG), 48–80 (APKP…ARRA), 90–122 (PAYE…FLMD), 124–158 (GRVT…FLRS), 160–192 (PLPE…SSDR), 198–230 (QRLA…LISQ), 235–268 (VQSL…YYIR), 270–305 (GHFE…FEES), and 369–407 (GRPR…FYED). Lysine 420 is subject to N6-acetyllysine. HAT repeat units lie at residues 498–530 (GTFQ…FLEE), 532–566 (KYFE…KFIA), 571–605 (RKLE…LEEE), 643–677 (YGVT…MECK), and 679–713 (GEID…FEVR). Residues 810–855 (LAQQVNPEEIQLGEDEDEDEMDLEPNEVRLEQQSVPAAVFGSLKED) form a disordered region. Positions 820–834 (QLGEDEDEDEMDLEP) are enriched in acidic residues. Residue serine 851 is modified to Phosphoserine.

It belongs to the crooked-neck family. As to quaternary structure, associates with RNA polymerase II, the TCR-specific proteins CKN1/CSA and ERCC6/CSB, and XPA. Identified in the spliceosome C complex. Component of the XAB2 complex, a multimeric protein complex composed of XAB2, PRPF19, AQR, ZNF830, ISY1, and PPIE. Identified in a pentameric intron-binding (IB) complex composed of AQR, XAB2, ISY1, ZNF830 and PPIE that is incorporated into the spliceosome as a preassembled complex. The IB complex does not contain PRPF19.

It localises to the nucleus. Its function is as follows. Involved in pre-mRNA splicing as component of the spliceosome. Involved in transcription-coupled repair (TCR), transcription and pre-mRNA splicing. This chain is Pre-mRNA-splicing factor SYF1 (XAB2), found in Homo sapiens (Human).